The sequence spans 738 residues: Protein ALEX (738 aa).

6 disordered regions span residues 1-105 (MSPS…EEAM), 155-188 (REDY…ASHA), 237-350 (TTFP…LPKP), 387-516 (MSGQ…LGQP), 528-578 (GEPG…LDPP), and 611-689 (GMRL…RPRI). The segment covering 257–273 (GSTTTPLSIWTAPQSQV) has biased composition (polar residues). Residues 279-301 (KSREPQLRASTQRDPHLSDKQPR) show a composition bias toward basic and acidic residues. Polar residues predominate over residues 387 to 396 (MSGQNQTEGQ). Pro residues-rich tracts occupy residues 410–438 (QPPP…PPSQ), 448–467 (PSLP…PRQP), and 476–485 (PGQPPSPLRS). Low complexity-rich tracts occupy residues 542-564 (PSLP…LPAG), 615-626 (RPASARSSPPAM), and 656-671 (ATRS…EAAS).

The protein belongs to the ALEX family. Interacts with the N-terminal region of the XLas isoforms of guanine nucleotide-binding protein G(s) subunit alpha.

The protein localises to the cell membrane. The protein resides in the cell projection. Its subcellular location is the ruffle. Functionally, may inhibit the adenylyl cyclase-stimulating activity of guanine nucleotide-binding protein G(s) subunit alpha which is produced from the same locus in a different open reading frame. In Rattus norvegicus (Rat), this protein is Protein ALEX.